Reading from the N-terminus, the 475-residue chain is MSSGRIVQIIGAVIDVEFNRTDVPQVYDALVVDGTDTTLEVQQQLGDGVVRTIAMGSTEGLKRGLPVTNTGAPITVPVGEATLGRIMDVLGRPIDEQGPVNSEDKWSIHRQAPSYDEQANSTDLLETGIKVIDLLCPFAKGGKVGLFGGAGVGKTVNMMELINNIALKHSGLSVFAGVGERTREGNDFYHEMQEAGVVDVENFTNSKVAMVYGQMNEPPGNRLRVALTGLTMAEYFRDQKDENGKGKDVLLFVDNIYRYTLAGTEVSALLGRMPSAVGYQPTLAEEMGVLQERITSTQTGSITSIQAVYVPADDLTDPSPATTFAHLDATVVLSRDIASQGIYPAIDPLDSTSRQLDPLVIGEEHYNVARGVQEVLQRYKELKDIIAILGMDELSEDDKMVVYRARKIQRFLSQPFHVAEVFTGAPGKYVTLRETISSFRDILDGKYDNLPEQAFYMAGGIDEVVAKAEKMKSAA.

148-155 (GGAGVGKT) provides a ligand contact to ATP.

It belongs to the ATPase alpha/beta chains family. In terms of assembly, F-type ATPases have 2 components, CF(1) - the catalytic core - and CF(0) - the membrane proton channel. CF(1) has five subunits: alpha(3), beta(3), gamma(1), delta(1), epsilon(1). CF(0) has three main subunits: a(1), b(2) and c(9-12). The alpha and beta chains form an alternating ring which encloses part of the gamma chain. CF(1) is attached to CF(0) by a central stalk formed by the gamma and epsilon chains, while a peripheral stalk is formed by the delta and b chains.

The protein localises to the cell inner membrane. It carries out the reaction ATP + H2O + 4 H(+)(in) = ADP + phosphate + 5 H(+)(out). Produces ATP from ADP in the presence of a proton gradient across the membrane. The catalytic sites are hosted primarily by the beta subunits. This is ATP synthase subunit beta from Psychrobacter sp. (strain PRwf-1).